Consider the following 228-residue polypeptide: DNA repair protein RecO (228 aa).

It belongs to the RecO family.

Its function is as follows. Involved in DNA repair and RecF pathway recombination. The sequence is that of DNA repair protein RecO from Mannheimia succiniciproducens (strain KCTC 0769BP / MBEL55E).